Consider the following 422-residue polypeptide: Tyrosine--tRNA ligase (422 aa).

Position 36 (Y36) interacts with L-tyrosine. The 'HIGH' region signature appears at 41 to 50 (PTAGSLHIGH). Residues Y174 and Q178 each coordinate L-tyrosine. The short motif at 234–238 (KFGKT) is the 'KMSKS' region element. K237 is an ATP binding site. The 65-residue stretch at 356–420 (TDLVTLLVES…GKKQYRLVTW (65 aa)) folds into the S4 RNA-binding domain.

Belongs to the class-I aminoacyl-tRNA synthetase family. TyrS type 1 subfamily. Homodimer.

It is found in the cytoplasm. It carries out the reaction tRNA(Tyr) + L-tyrosine + ATP = L-tyrosyl-tRNA(Tyr) + AMP + diphosphate + H(+). In terms of biological role, catalyzes the attachment of tyrosine to tRNA(Tyr) in a two-step reaction: tyrosine is first activated by ATP to form Tyr-AMP and then transferred to the acceptor end of tRNA(Tyr). The protein is Tyrosine--tRNA ligase of Aeromonas hydrophila subsp. hydrophila (strain ATCC 7966 / DSM 30187 / BCRC 13018 / CCUG 14551 / JCM 1027 / KCTC 2358 / NCIMB 9240 / NCTC 8049).